The primary structure comprises 121 residues: Large ribosomal subunit protein bL12 (121 aa).

This sequence belongs to the bacterial ribosomal protein bL12 family. In terms of assembly, homodimer. Part of the ribosomal stalk of the 50S ribosomal subunit. Forms a multimeric L10(L12)X complex, where L10 forms an elongated spine to which 2 to 4 L12 dimers bind in a sequential fashion. Binds GTP-bound translation factors.

In terms of biological role, forms part of the ribosomal stalk which helps the ribosome interact with GTP-bound translation factors. Is thus essential for accurate translation. This is Large ribosomal subunit protein bL12 from Streptococcus uberis (strain ATCC BAA-854 / 0140J).